Consider the following 67-residue polypeptide: UPF0337 protein msl9551 (67 aa).

Belongs to the UPF0337 (CsbD) family.

The polypeptide is UPF0337 protein msl9551 (Mesorhizobium japonicum (strain LMG 29417 / CECT 9101 / MAFF 303099) (Mesorhizobium loti (strain MAFF 303099))).